We begin with the raw amino-acid sequence, 117 residues long: Hydrogenase maturation factor HypA (117 aa).

Position 2 (histidine 2) interacts with Ni(2+). 4 residues coordinate Zn(2+): cysteine 73, cysteine 76, cysteine 90, and cysteine 93.

Belongs to the HypA/HybF family.

Involved in the maturation of [NiFe] hydrogenases. Required for nickel insertion into the metal center of the hydrogenase. This chain is Hydrogenase maturation factor HypA, found in Pectobacterium atrosepticum (strain SCRI 1043 / ATCC BAA-672) (Erwinia carotovora subsp. atroseptica).